The sequence spans 177 residues: Transcription termination/antitermination protein NusG (177 aa).

Residues 128 to 156 enclose the KOW domain; the sequence is ETVKVIDGPFANFTGSIEEIDYDKSKVKV.

This sequence belongs to the NusG family.

In terms of biological role, participates in transcription elongation, termination and antitermination. Stimulates RNA polymerase pausing at U107 and U144 in the trp leader. NusG-stimulated pausing is sequence specific. Does not affect trp leader termination. This is Transcription termination/antitermination protein NusG from Bacillus subtilis (strain 168).